The chain runs to 613 residues: Dihydroxy-acid dehydratase (613 aa).

Residue aspartate 81 coordinates Mg(2+). Residue cysteine 122 participates in [2Fe-2S] cluster binding. 2 residues coordinate Mg(2+): aspartate 123 and lysine 124. An N6-carboxylysine modification is found at lysine 124. Position 195 (cysteine 195) interacts with [2Fe-2S] cluster. Glutamate 491 contributes to the Mg(2+) binding site. Catalysis depends on serine 517, which acts as the Proton acceptor.

It belongs to the IlvD/Edd family. As to quaternary structure, homodimer. The cofactor is [2Fe-2S] cluster. It depends on Mg(2+) as a cofactor.

It catalyses the reaction (2R)-2,3-dihydroxy-3-methylbutanoate = 3-methyl-2-oxobutanoate + H2O. The enzyme catalyses (2R,3R)-2,3-dihydroxy-3-methylpentanoate = (S)-3-methyl-2-oxopentanoate + H2O. The protein operates within amino-acid biosynthesis; L-isoleucine biosynthesis; L-isoleucine from 2-oxobutanoate: step 3/4. It participates in amino-acid biosynthesis; L-valine biosynthesis; L-valine from pyruvate: step 3/4. In terms of biological role, functions in the biosynthesis of branched-chain amino acids. Catalyzes the dehydration of (2R,3R)-2,3-dihydroxy-3-methylpentanoate (2,3-dihydroxy-3-methylvalerate) into 2-oxo-3-methylpentanoate (2-oxo-3-methylvalerate) and of (2R)-2,3-dihydroxy-3-methylbutanoate (2,3-dihydroxyisovalerate) into 2-oxo-3-methylbutanoate (2-oxoisovalerate), the penultimate precursor to L-isoleucine and L-valine, respectively. The protein is Dihydroxy-acid dehydratase of Buchnera aphidicola subsp. Melaphis rhois.